The primary structure comprises 199 residues: Inner membrane protein E199L (199 aa).

A helical transmembrane segment spans residues 150-170 (INVMNHPFLTLILIILILIII).

The protein belongs to the asfivirus E199L family. As to quaternary structure, interacts with host PYCR2; this interaction results in autophagy activation. In terms of processing, contains intramolecular disulfide bonds.

The protein localises to the virion membrane. It is found in the host membrane. Its function is as follows. Essential for viral fusion with host endosomal membrane and core release. Not required for virus morphogenesis and egress. Induces complete autophagy through the interaction with and down-regulation of host PYCR2. The protein is Inner membrane protein E199L of Ornithodoros (relapsing fever ticks).